Here is a 456-residue protein sequence, read N- to C-terminus: MSWSVLEALRKDPEILRENLRRRFLPLDMLERAIELDRKWREAVTELNSLRERRNEINRSIPRADPGEREELIRKAKEIGEEIERLEDVLEKLSQERDSILMSMPALIDDSVPIGPNEDYNKPIRFWGKPKVPRSKLDSFMEQTRGFNVEYELIDWEPLGHADELEVMLKQVDTVKAGQLAGSRFFYLFKDIVWLEQALILFALDKISRKGFIPVIPPYMMRRDYYLGVVDLNTFEDSIYKVEGEDLYLIATSEHPLVAMHAGDTFTEDELPRLYVGLSPCFRKEAGTHGKDTKGIFRVHQFTKVEQIVFSKPEESKYWHERLIENAEEIYRELEIPYRIVNIASGDLGASAAKKYDLEGWFPAQGKYRELVSCSNCVDWQSYRLRIKLDRKGRREFVHTLNSTALATTRTISAIVENHQREDGSVRIPKALRKYLEIFEQAPKEEIVPIEKILKE.

252-254 (TSE) is an L-serine binding site. Residues 283-285 (RKE) and Val-299 contribute to the ATP site. Glu-306 provides a ligand contact to L-serine. ATP is bound at residue 370–373 (ELVS). Thr-404 contacts L-serine.

The protein belongs to the class-II aminoacyl-tRNA synthetase family. Type-1 seryl-tRNA synthetase subfamily. As to quaternary structure, homodimer. The tRNA molecule binds across the dimer.

Its subcellular location is the cytoplasm. It catalyses the reaction tRNA(Ser) + L-serine + ATP = L-seryl-tRNA(Ser) + AMP + diphosphate + H(+). It carries out the reaction tRNA(Sec) + L-serine + ATP = L-seryl-tRNA(Sec) + AMP + diphosphate + H(+). It participates in aminoacyl-tRNA biosynthesis; selenocysteinyl-tRNA(Sec) biosynthesis; L-seryl-tRNA(Sec) from L-serine and tRNA(Sec): step 1/1. Catalyzes the attachment of serine to tRNA(Ser). Is also able to aminoacylate tRNA(Sec) with serine, to form the misacylated tRNA L-seryl-tRNA(Sec), which will be further converted into selenocysteinyl-tRNA(Sec). The chain is Serine--tRNA ligase from Korarchaeum cryptofilum (strain OPF8).